The following is a 761-amino-acid chain: Probable beta-galactosidase 2 (761 aa).

The signal sequence occupies residues 1 to 23 (MGTIKNNFQLLWLILLIVVLVNG). Residues Asn39 and Asn110 are each glycosylated (N-linked (GlcNAc...) asparagine). The active-site Proton donor is Glu195. Asn206 carries N-linked (GlcNAc...) asparagine glycosylation. Glu267 functions as the Nucleophile in the catalytic mechanism. 11 N-linked (GlcNAc...) asparagine glycosylation sites follow: Asn385, Asn405, Asn438, Asn501, Asn552, Asn553, Asn577, Asn592, Asn642, Asn690, and Asn696.

Belongs to the glycosyl hydrolase 35 family.

It catalyses the reaction Hydrolysis of terminal non-reducing beta-D-galactose residues in beta-D-galactosides.. In terms of biological role, cleaves beta-linked terminal galactosyl residues from gangliosides, glycoproteins, and glycosaminoglycans. The polypeptide is Probable beta-galactosidase 2 (glb2) (Dictyostelium discoideum (Social amoeba)).